Here is a 797-residue protein sequence, read N- to C-terminus: Trafficking protein particle complex subunit 12 (797 aa).

2 disordered regions span residues methionine 1–serine 257 and serine 286–serine 338. The segment covering glutamine 9–glutamate 23 has biased composition (low complexity). Residues methionine 29–threonine 43 show a composition bias toward basic and acidic residues. Acidic residues predominate over residues glycine 47 to proline 58. Composition is skewed to basic and acidic residues over residues phenylalanine 66–methionine 75 and alanine 107–valine 121. Phosphoserine is present on residues serine 125 and serine 128. Threonine 130 carries the post-translational modification Phosphothreonine. A compositionally biased stretch (basic and acidic residues) spans valine 173–glutamine 185. Residues isoleucine 206–glutamine 216 are compositionally biased toward polar residues. Low complexity predominate over residues serine 232–lysine 244. A phosphoserine mark is found at serine 234, serine 309, and serine 314. 4 TPR repeats span residues glycine 607–glutamine 640, proline 642–leucine 675, isoleucine 682–asparagine 715, and alanine 716–histidine 749.

As to quaternary structure, component of the multisubunit TRAPP (transport protein particle) complex, which includes at least TRAPPC2, TRAPPC2L, TRAPPC3, TRAPPC3L, TRAPPC4, TRAPPC5, TRAPPC8, TRAPPC9, TRAPPC10, TRAPPC11 and TRAPPC12. Interacts with CENPE. In terms of processing, phosphorylated as the cells enter mitosis but is dephosphorylated at or before the onset of anaphase. The phosphorylated form recruits CENPE to kinetochores more efficiently than the non-phosphorylated form.

Its subcellular location is the endoplasmic reticulum-Golgi intermediate compartment. The protein resides in the nucleus. Functionally, component of the TRAPP complex, which is involved in endoplasmic reticulum to Golgi apparatus trafficking at a very early stage. Also plays a role in chromosome congression, kinetochore assembly and stability and controls the recruitment of CENPE to the kinetochores. The polypeptide is Trafficking protein particle complex subunit 12 (Mus musculus (Mouse)).